The primary structure comprises 483 residues: BTB/POZ domain and ankyrin repeat-containing protein NBCL (483 aa).

The BTB domain occupies serine 25–proline 109. The segment at arginine 115–threonine 129 adopts a C2HC NPR-type zinc-finger fold. Positions 118, 123, 125, and 128 each coordinate Zn(2+). ANK repeat units lie at residues glutamine 254 to aspartate 283, glutamate 284 to tyrosine 313, serine 318 to valine 347, and aspartate 351 to leucine 385. A disordered region spans residues glutamate 401–alanine 437. The span at asparagine 403–alanine 419 shows a compositional bias: low complexity.

It belongs to the plant 'ANKYRIN-BTB/POZ' family. 'NOOT-BOP-COCH-like' (NBCL) subfamily. As to quaternary structure, homodimer. Interacts with APP1 around the plasma membrane and in the nucleus; this interaction disturbs APP1-mediated regulation of the nuclear transcription factor Y subunit (NF-YA1). Mainly expressed in root nodules, to a lesser extent in shoot apical meristems (SAM) and root meristems (RM), and barely in leaves, non-nodulating roots and root apical meristems (RAM).

It localises to the nucleus. It is found in the cytoplasm. Its subcellular location is the cell membrane. Its pathway is protein modification; protein ubiquitination. May act as a substrate-specific adapter of an E3 ubiquitin-protein ligase complex (CUL3-RBX1-BTB) which mediates the ubiquitination and subsequent proteasomal degradation of target proteins. Transcriptional co-regulator involved in the promotion of leaf and floral meristem fate and determinacy. Required for the abscission of senescent organs, probably by regulating the cell wall disorganization in abscission zones (AZs, e.g. pulvini at the base of leaves). Involved in the coordination of the symbiotic nodule developmental program; promotes the formation of root nodules by interacting directly with APP1 to modulate the expression of the nuclear transcription factor Y subunit (NF-YA1), a key nodulin. Necessary for the robust maintenance of nodule identity throughout the nodule developmental program. The chain is BTB/POZ domain and ankyrin repeat-containing protein NBCL from Lotus japonicus (Lotus corniculatus var. japonicus).